A 138-amino-acid polypeptide reads, in one-letter code: Large ribosomal subunit protein uL16 (138 aa).

A compositionally biased stretch (basic residues) spans 1–13; that stretch reads MLQPKRRKYRKEQ. The disordered stretch occupies residues 1 to 20; sequence MLQPKRRKYRKEQKGRNTGI.

Belongs to the universal ribosomal protein uL16 family. In terms of assembly, part of the 50S ribosomal subunit.

Its function is as follows. Binds 23S rRNA and is also seen to make contacts with the A and possibly P site tRNAs. The sequence is that of Large ribosomal subunit protein uL16 from Ralstonia nicotianae (strain ATCC BAA-1114 / GMI1000) (Ralstonia solanacearum).